The chain runs to 719 residues: Phosphoribosylformylglycinamidine synthase subunit PurL (719 aa).

His47 is an active-site residue. ATP contacts are provided by Tyr50 and Lys89. A Mg(2+)-binding site is contributed by Glu91. Substrate contacts are provided by residues 92–95 (SHNH) and Arg114. His93 (proton acceptor) is an active-site residue. Asp115 contributes to the Mg(2+) binding site. Residue Gln238 participates in substrate binding. Asp266 contributes to the Mg(2+) binding site. Substrate is bound at residue 310-312 (ESQ). Residues Asp488 and Gly525 each contribute to the ATP site. Asn526 serves as a coordination point for Mg(2+). Ser528 serves as a coordination point for substrate.

It belongs to the FGAMS family. As to quaternary structure, monomer. Part of the FGAM synthase complex composed of 1 PurL, 1 PurQ and 2 PurS subunits.

The protein localises to the cytoplasm. It catalyses the reaction N(2)-formyl-N(1)-(5-phospho-beta-D-ribosyl)glycinamide + L-glutamine + ATP + H2O = 2-formamido-N(1)-(5-O-phospho-beta-D-ribosyl)acetamidine + L-glutamate + ADP + phosphate + H(+). It participates in purine metabolism; IMP biosynthesis via de novo pathway; 5-amino-1-(5-phospho-D-ribosyl)imidazole from N(2)-formyl-N(1)-(5-phospho-D-ribosyl)glycinamide: step 1/2. In terms of biological role, part of the phosphoribosylformylglycinamidine synthase complex involved in the purines biosynthetic pathway. Catalyzes the ATP-dependent conversion of formylglycinamide ribonucleotide (FGAR) and glutamine to yield formylglycinamidine ribonucleotide (FGAM) and glutamate. The FGAM synthase complex is composed of three subunits. PurQ produces an ammonia molecule by converting glutamine to glutamate. PurL transfers the ammonia molecule to FGAR to form FGAM in an ATP-dependent manner. PurS interacts with PurQ and PurL and is thought to assist in the transfer of the ammonia molecule from PurQ to PurL. The protein is Phosphoribosylformylglycinamidine synthase subunit PurL of Roseobacter denitrificans (strain ATCC 33942 / OCh 114) (Erythrobacter sp. (strain OCh 114)).